Reading from the N-terminus, the 242-residue chain is DNA repair protein RecO (242 aa).

It belongs to the RecO family.

Functionally, involved in DNA repair and RecF pathway recombination. The protein is DNA repair protein RecO of Vibrio atlanticus (strain LGP32) (Vibrio splendidus (strain Mel32)).